Reading from the N-terminus, the 350-residue chain is 4-hydroxy-3-methylbut-2-en-1-yl diphosphate synthase (flavodoxin) (350 aa).

Positions 263, 266, 298, and 305 each coordinate [4Fe-4S] cluster.

This sequence belongs to the IspG family. [4Fe-4S] cluster is required as a cofactor.

It catalyses the reaction (2E)-4-hydroxy-3-methylbut-2-enyl diphosphate + oxidized [flavodoxin] + H2O + 2 H(+) = 2-C-methyl-D-erythritol 2,4-cyclic diphosphate + reduced [flavodoxin]. Its pathway is isoprenoid biosynthesis; isopentenyl diphosphate biosynthesis via DXP pathway; isopentenyl diphosphate from 1-deoxy-D-xylulose 5-phosphate: step 5/6. Its function is as follows. Converts 2C-methyl-D-erythritol 2,4-cyclodiphosphate (ME-2,4cPP) into 1-hydroxy-2-methyl-2-(E)-butenyl 4-diphosphate. The protein is 4-hydroxy-3-methylbut-2-en-1-yl diphosphate synthase (flavodoxin) of Nautilia profundicola (strain ATCC BAA-1463 / DSM 18972 / AmH).